The primary structure comprises 127 residues: MGVERYLLVALGGALGSLLRYGLGAWVQGSLGAGFPWSTLFVNALGSFLIGLTLRLSLEGALSGEARLFLAVGVLGGFTTFSSLSYETLALLQGGEVGKALLYAFGSLFLGLLLAFLGYRLGGALVG.

Helical transmembrane passes span Leu7–Val27, Leu31–Gly51, Leu68–Thr88, and Val97–Leu117. Na(+) is bound by residues Gly76 and Thr79.

This sequence belongs to the fluoride channel Fluc/FEX (TC 1.A.43) family.

The protein localises to the cell inner membrane. It catalyses the reaction fluoride(in) = fluoride(out). Its activity is regulated as follows. Na(+) is not transported, but it plays an essential structural role and its presence is essential for fluoride channel function. Fluoride-specific ion channel. Important for reducing fluoride concentration in the cell, thus reducing its toxicity. This Thermus thermophilus (strain ATCC BAA-163 / DSM 7039 / HB27) protein is Fluoride-specific ion channel FluC.